The following is a 282-amino-acid chain: Glutamyl endopeptidase (282 aa).

The signal sequence occupies residues 1 to 27 (MKKRFLSICTMTIAALATTTMVNTSYA). A propeptide spanning residues 28–66 (KTDTESHNHSSLGTENKNVLDINSSSHNIKPSQNKSYPS) is cleaved from the precursor. Residues His117, Asp159, and Ser235 each act as charge relay system in the active site.

Belongs to the peptidase S1B family.

It localises to the secreted. The catalysed reaction is Preferential cleavage: Glu-|-Xaa, Asp-|-Xaa.. Functionally, exhibits a significant hydrolytic activity for the carbonyl side of glutamic acid. Shows activity toward human fibronectin and type 1 collagen. The protein is Glutamyl endopeptidase (gseA) of Staphylococcus epidermidis (strain ATCC 35984 / DSM 28319 / BCRC 17069 / CCUG 31568 / BM 3577 / RP62A).